Consider the following 401-residue polypeptide: Carbamoyl phosphate synthase small chain (401 aa).

Positions 1 to 203 (MTATPAWTIQ…EGYSTLGETD (203 aa)) are CPSase. Positions 56, 255, and 257 each coordinate L-glutamine. A Glutamine amidotransferase type-1 domain is found at 207 to 395 (HVVALDYGVK…LNLIREKKGE (189 aa)). Cys284 serves as the catalytic Nucleophile. Positions 285, 288, 326, 328, and 329 each coordinate L-glutamine. Active-site residues include His368 and Glu370.

This sequence belongs to the CarA family. In terms of assembly, composed of two chains; the small (or glutamine) chain promotes the hydrolysis of glutamine to ammonia, which is used by the large (or ammonia) chain to synthesize carbamoyl phosphate. Tetramer of heterodimers (alpha,beta)4.

The catalysed reaction is hydrogencarbonate + L-glutamine + 2 ATP + H2O = carbamoyl phosphate + L-glutamate + 2 ADP + phosphate + 2 H(+). It catalyses the reaction L-glutamine + H2O = L-glutamate + NH4(+). It functions in the pathway amino-acid biosynthesis; L-arginine biosynthesis; carbamoyl phosphate from bicarbonate: step 1/1. The protein operates within pyrimidine metabolism; UMP biosynthesis via de novo pathway; (S)-dihydroorotate from bicarbonate: step 1/3. Small subunit of the glutamine-dependent carbamoyl phosphate synthetase (CPSase). CPSase catalyzes the formation of carbamoyl phosphate from the ammonia moiety of glutamine, carbonate, and phosphate donated by ATP, constituting the first step of 2 biosynthetic pathways, one leading to arginine and/or urea and the other to pyrimidine nucleotides. The small subunit (glutamine amidotransferase) binds and cleaves glutamine to supply the large subunit with the substrate ammonia. In Rhizobium meliloti (strain 1021) (Ensifer meliloti), this protein is Carbamoyl phosphate synthase small chain.